We begin with the raw amino-acid sequence, 195 residues long: Rubrerythrin (195 aa).

A Ferritin-like diiron domain is found at 1–150 (MKSLKGTKTA…KLAKNIEEGK (150 aa)). Fe(3+) is bound by residues Glu-20, Glu-53, Glu-98, Glu-101, Glu-132, His-135, Cys-162, Cys-165, Cys-178, and Cys-181. The region spanning 157–195 (VVLWKCGNCGFIWEGAEAPLKCPACLHPQAYFEVFKETY) is the Rubredoxin-like domain.

As to quaternary structure, homodimer. Possesses two rubredoxin-like centers and two non-sulfur oxo-bridged di-iron centers per dimer. It depends on Fe(3+) as a cofactor.

The protein resides in the cytoplasm. May provide oxidative stress protection via catalytic reduction of intracellular hydrogen peroxide. The sequence is that of Rubrerythrin (rbr) from Clostridium perfringens (strain 13 / Type A).